A 209-amino-acid polypeptide reads, in one-letter code: Thiamine-phosphate synthase (209 aa).

Residues 36 to 40 and Asn68 contribute to the 4-amino-2-methyl-5-(diphosphooxymethyl)pyrimidine site; that span reads QYRDK. Mg(2+) contacts are provided by Asp69 and Asp87. Thr106 provides a ligand contact to 4-amino-2-methyl-5-(diphosphooxymethyl)pyrimidine. A 2-[(2R,5Z)-2-carboxy-4-methylthiazol-5(2H)-ylidene]ethyl phosphate-binding site is contributed by 133–135; the sequence is SST. Position 136 (Lys136) interacts with 4-amino-2-methyl-5-(diphosphooxymethyl)pyrimidine. A 2-[(2R,5Z)-2-carboxy-4-methylthiazol-5(2H)-ylidene]ethyl phosphate-binding site is contributed by Gly163.

Belongs to the thiamine-phosphate synthase family. Mg(2+) is required as a cofactor.

The catalysed reaction is 2-[(2R,5Z)-2-carboxy-4-methylthiazol-5(2H)-ylidene]ethyl phosphate + 4-amino-2-methyl-5-(diphosphooxymethyl)pyrimidine + 2 H(+) = thiamine phosphate + CO2 + diphosphate. It carries out the reaction 2-(2-carboxy-4-methylthiazol-5-yl)ethyl phosphate + 4-amino-2-methyl-5-(diphosphooxymethyl)pyrimidine + 2 H(+) = thiamine phosphate + CO2 + diphosphate. The enzyme catalyses 4-methyl-5-(2-phosphooxyethyl)-thiazole + 4-amino-2-methyl-5-(diphosphooxymethyl)pyrimidine + H(+) = thiamine phosphate + diphosphate. The protein operates within cofactor biosynthesis; thiamine diphosphate biosynthesis; thiamine phosphate from 4-amino-2-methyl-5-diphosphomethylpyrimidine and 4-methyl-5-(2-phosphoethyl)-thiazole: step 1/1. In terms of biological role, condenses 4-methyl-5-(beta-hydroxyethyl)thiazole monophosphate (THZ-P) and 2-methyl-4-amino-5-hydroxymethyl pyrimidine pyrophosphate (HMP-PP) to form thiamine monophosphate (TMP). This is Thiamine-phosphate synthase from Pseudomonas aeruginosa (strain UCBPP-PA14).